Consider the following 226-residue polypeptide: uncharacterized protein (226 aa).

To L.innocua lin1255, lin1742 and lin2408.

This is an uncharacterized protein from Listeria innocua serovar 6a (strain ATCC BAA-680 / CLIP 11262).